The chain runs to 624 residues: Serine/threonine-protein kinase ppk35 (624 aa).

Residues 162–465 form the Protein kinase domain; sequence FDLLVKLGQG…TIEIQKHPFF (304 aa). ATP contacts are provided by residues 168–176 and Lys191; that span reads LGQGGYGSV. Asp285 functions as the Proton acceptor in the catalytic mechanism. The AGC-kinase C-terminal domain occupies 466–548; that stretch reads KRLHWNGLRK…KYRPNARKPL (83 aa). Residues 545–559 show a composition bias toward basic residues; the sequence is RKPLVGRHREKRQLR. The interval 545-617 is disordered; that stretch reads RKPLVGRHRE…VHRLLERKGK (73 aa). Residues 560–574 are compositionally biased toward basic and acidic residues; sequence KEKPEKKNNSTKQKD. The segment covering 596-609 has biased composition (basic residues); it reads SKTKGHKTKSSRVH.

This sequence belongs to the protein kinase superfamily. Ser/Thr protein kinase family.

The protein localises to the cytoplasm. It localises to the nucleus. Its subcellular location is the nucleolus. The catalysed reaction is L-seryl-[protein] + ATP = O-phospho-L-seryl-[protein] + ADP + H(+). It catalyses the reaction L-threonyl-[protein] + ATP = O-phospho-L-threonyl-[protein] + ADP + H(+). Functionally, has a role in meiosis. In Schizosaccharomyces pombe (strain 972 / ATCC 24843) (Fission yeast), this protein is Serine/threonine-protein kinase ppk35 (ppk35).